The following is a 131-amino-acid chain: Global transcriptional regulator Spx (131 aa).

A disulfide bridge connects residues Cys-10 and Cys-13.

This sequence belongs to the ArsC family. Spx subfamily. Interacts with the C-terminal domain of the alpha subunit of the RNAP.

The protein localises to the cytoplasm. Its function is as follows. Global transcriptional regulator that plays a key role in stress response and exerts either positive or negative regulation of genes. Acts by interacting with the C-terminal domain of the alpha subunit of the RNA polymerase (RNAP). This interaction can enhance binding of RNAP to the promoter region of target genes and stimulate their transcription, or block interaction of RNAP with activator. This chain is Global transcriptional regulator Spx, found in Listeria innocua serovar 6a (strain ATCC BAA-680 / CLIP 11262).